Consider the following 472-residue polypeptide: MNNSQGRVTFEDVTVNFTQGEWQRLNPEQRNLYRDVMLENYSNLVSVGQGETTKPDVILRLEQGKEPWLEEEEVLGSGRAEKNGDIGGQIWKPKDVKESLAREVPSINKETLTTQKGVECDGSKKILPLGIDDVSSLQHYVQNNSHDDNGYRKLVGNNPSKFVGQQLKCNACRKLFSSKSRLQSHLRRHACQKPFECHSCGRAFGEKWKLDKHQKTHAEERPYKCENCGNAYKQKSNLFQHQKMHTKEKPYQCKTCGKAFSWKSSCINHEKIHNAKKSYQCNECEKSFRQNSTLIQHKKVHTGQKPFQCTDCGKAFIYKSDLVKHQRIHTGEKPYKCSICEKAFSQKSNVIDHEKIHTGKRAYECDLCGNTFIQKKNLIQHKKIHTGEKPYECNRCGKAFFQKSNLHSHQKTHSGERTYRCSECGKTFIRKLNLSLHKKTHTGQKPYGCSECGKAFADRSYLVRHQKRIHSR.

Residues 8–80 (VTFEDVTVNF…EEEVLGSGRA (73 aa)) form the KRAB domain. 11 consecutive C2H2-type zinc fingers follow at residues 167–189 (LKCN…LRRH), 195–217 (FECH…QKTH), 223–245 (YKCE…QKMH), 251–273 (YQCK…EKIH), 279–301 (YQCN…KKVH), 307–329 (FQCT…QRIH), 335–357 (YKCS…EKIH), 363–385 (YECD…KKIH), 391–413 (YECN…QKTH), 419–441 (YRCS…KKTH), and 447–470 (YGCS…KRIH).

The protein belongs to the krueppel C2H2-type zinc-finger protein family.

The protein resides in the nucleus. May be involved in transcriptional regulation. This chain is Zinc finger imprinted 3 (ZIM3), found in Homo sapiens (Human).